The primary structure comprises 391 residues: GTPase Obg (391 aa).

The 159-residue stretch at 1–159 (MKFIDEALIR…RDLLLELMLL (159 aa)) folds into the Obg domain. The OBG-type G domain maps to 160–333 (ADVGMLGLPN…LTRDIMDFIE (174 aa)). Residues 166 to 173 (GLPNAGKS), 191 to 195 (FTTLV), 213 to 216 (DIPG), 283 to 286 (NKID), and 314 to 316 (SAA) contribute to the GTP site. Mg(2+) contacts are provided by Ser173 and Thr193.

It belongs to the TRAFAC class OBG-HflX-like GTPase superfamily. OBG GTPase family. In terms of assembly, monomer. Mg(2+) is required as a cofactor.

The protein resides in the cytoplasm. In terms of biological role, an essential GTPase which binds GTP, GDP and possibly (p)ppGpp with moderate affinity, with high nucleotide exchange rates and a fairly low GTP hydrolysis rate. Plays a role in control of the cell cycle, stress response, ribosome biogenesis and in those bacteria that undergo differentiation, in morphogenesis control. This chain is GTPase Obg, found in Actinobacillus pleuropneumoniae serotype 5b (strain L20).